A 622-amino-acid chain; its full sequence is 1-deoxy-D-xylulose-5-phosphate synthase (622 aa).

Thiamine diphosphate contacts are provided by residues His80 and 121-123 (GHS). Asp152 is a binding site for Mg(2+). Thiamine diphosphate is bound by residues 153 to 154 (GA), Asn181, Tyr288, and Glu369. Asn181 serves as a coordination point for Mg(2+).

This sequence belongs to the transketolase family. DXPS subfamily. Homodimer. Requires Mg(2+) as cofactor. Thiamine diphosphate serves as cofactor.

It catalyses the reaction D-glyceraldehyde 3-phosphate + pyruvate + H(+) = 1-deoxy-D-xylulose 5-phosphate + CO2. Its pathway is metabolic intermediate biosynthesis; 1-deoxy-D-xylulose 5-phosphate biosynthesis; 1-deoxy-D-xylulose 5-phosphate from D-glyceraldehyde 3-phosphate and pyruvate: step 1/1. In terms of biological role, catalyzes the acyloin condensation reaction between C atoms 2 and 3 of pyruvate and glyceraldehyde 3-phosphate to yield 1-deoxy-D-xylulose-5-phosphate (DXP). The chain is 1-deoxy-D-xylulose-5-phosphate synthase from Psychromonas ingrahamii (strain DSM 17664 / CCUG 51855 / 37).